The following is a 253-amino-acid chain: Regulatory protein VirG (253 aa).

The Response regulatory domain maps to 15–129 (HVLVIDDDVA…EFLARIRVAL (115 aa)). Aspartate 64 is subject to 4-aspartylphosphate. A DNA-binding region (ompR/PhoB-type) is located at residues 141–241 (RRSFSFADWT…ARGAGYFFDA (101 aa)).

Phosphorylated by wide host range (WHR) VirA protein.

The protein localises to the cytoplasm. In terms of biological role, virG is required for the positive regulation of at least two vir loci encoded by the Ti plasmid of A.tumefaciens. The protein is Regulatory protein VirG (virG) of Agrobacterium fabrum (strain C58 / ATCC 33970) (Agrobacterium tumefaciens (strain C58)).